Reading from the N-terminus, the 900-residue chain is Suppressor of activated egl-4 protein 1 (900 aa).

Disordered regions lie at residues 1-75 (MPPP…HLPT), 340-380 (PVAE…SRKN), and 406-425 (WASTSSADEKMQTERKESLE). Positions 53–75 (ASGQQHRPSIMSGQSHQNNHLPT) are enriched in polar residues. Composition is skewed to basic and acidic residues over residues 358–377 (GDMKHLMNGKKRSEDGDGPS) and 412–425 (ADEKMQTERKESLE). The ELM2 domain occupies 451 to 544 (PHINLGKNYQ…AAVEDLLRSD (94 aa)). One can recognise an SANT domain in the interval 560–611 (NDSVLWTPDEIYQFQDAIYQSEKDFDKVAVELPGKSVKECVQFYYTWKKDCP). The segment at 710 to 729 (PTAPRAHHTPSASASKKGAQ) is disordered. The C2H2-type zinc finger occupies 736-758 (FHCRLCDKCFEKVKSLNAHMKSH).

As to quaternary structure, may be a component of a histone deacetylase complex containing saeg-2, saeg-1 and hda-2. May interact with egl-4. In terms of tissue distribution, ubiquitously expressed.

The protein resides in the nucleus. Functionally, as a likely component of a histone deacetylase complex, together with saeg-2 and hda-2, functions downstream of the cAMP-dependent kinase egl-4 to regulate the expression of genes required for egg-laying and foraging. The polypeptide is Suppressor of activated egl-4 protein 1 (Caenorhabditis elegans).